Here is a 271-residue protein sequence, read N- to C-terminus: MLPTVFIVSDGTGITAETFAHSILSQFDQKFRLVRLPFVDSLEKAYATVEKINDAAVHDGRRAIVFTTLVDSESNDIVKRSNALVLDMFQRFVEPLEQELELKSSHAMGRGHQNADTEEYKTRIEAINFSLAHDDGQSNRNLSEADVILVGVSRSGKTPTSLYLAMQYGVKAANYPLIPEDFERGKLPSALTPHRDKLFGLSIDPQRLSEIRNERRPGSKYAAPENCRYEINEAEAMMRREGIKWLSSTHKSIEEIATTILQEIRLDRQSY.

An ADP-binding site is contributed by 151-158 (GVSRSGKT).

This sequence belongs to the pyruvate, phosphate/water dikinase regulatory protein family. PSRP subfamily.

It carries out the reaction [pyruvate, water dikinase] + ADP = [pyruvate, water dikinase]-phosphate + AMP + H(+). It catalyses the reaction [pyruvate, water dikinase]-phosphate + phosphate + H(+) = [pyruvate, water dikinase] + diphosphate. Functionally, bifunctional serine/threonine kinase and phosphorylase involved in the regulation of the phosphoenolpyruvate synthase (PEPS) by catalyzing its phosphorylation/dephosphorylation. The protein is Putative phosphoenolpyruvate synthase regulatory protein of Burkholderia ambifaria (strain MC40-6).